The following is a 305-amino-acid chain: tRNA uridine(34) hydroxylase (305 aa).

The 95-residue stretch at A125–S219 folds into the Rhodanese domain. C179 acts as the Cysteine persulfide intermediate in catalysis.

It belongs to the TrhO family.

The catalysed reaction is uridine(34) in tRNA + AH2 + O2 = 5-hydroxyuridine(34) in tRNA + A + H2O. Catalyzes oxygen-dependent 5-hydroxyuridine (ho5U) modification at position 34 in tRNAs. This Brucella ovis (strain ATCC 25840 / 63/290 / NCTC 10512) protein is tRNA uridine(34) hydroxylase.